Consider the following 231-residue polypeptide: Uridylate kinase (231 aa).

6-9 (KLSG) is an ATP binding site. The interval 14 to 19 (GEGGRG) is involved in allosteric activation by GTP. ATP contacts are provided by Gly-49 and Arg-53. Residues Asp-66 and 127–134 (TSNPFFTT) each bind UMP. ATP is bound by residues Thr-154, Tyr-160, and Asp-163.

It belongs to the UMP kinase family. As to quaternary structure, homohexamer.

Its subcellular location is the cytoplasm. It carries out the reaction UMP + ATP = UDP + ADP. The protein operates within pyrimidine metabolism; CTP biosynthesis via de novo pathway; UDP from UMP (UMPK route): step 1/1. Allosterically activated by GTP. Inhibited by UTP. In terms of biological role, catalyzes the reversible phosphorylation of UMP to UDP. This Thermotoga maritima (strain ATCC 43589 / DSM 3109 / JCM 10099 / NBRC 100826 / MSB8) protein is Uridylate kinase.